The chain runs to 309 residues: UDP-N-acetylenolpyruvoylglucosamine reductase (309 aa).

The region spanning 34 to 221 (RVGGPAQVLF…TAAREAAQPI (188 aa)) is the FAD-binding PCMH-type domain. Residue R179 is part of the active site. The active-site Proton donor is S228. Residue E298 is part of the active site.

Belongs to the MurB family. FAD serves as cofactor.

It is found in the cytoplasm. The enzyme catalyses UDP-N-acetyl-alpha-D-muramate + NADP(+) = UDP-N-acetyl-3-O-(1-carboxyvinyl)-alpha-D-glucosamine + NADPH + H(+). The protein operates within cell wall biogenesis; peptidoglycan biosynthesis. Its function is as follows. Cell wall formation. This chain is UDP-N-acetylenolpyruvoylglucosamine reductase, found in Methylorubrum extorquens (strain CM4 / NCIMB 13688) (Methylobacterium extorquens).